The following is a 152-amino-acid chain: Ribosome maturation factor RimP (152 aa).

This sequence belongs to the RimP family.

It is found in the cytoplasm. Functionally, required for maturation of 30S ribosomal subunits. The polypeptide is Ribosome maturation factor RimP (Alkaliphilus metalliredigens (strain QYMF)).